The sequence spans 261 residues: Ribonuclease PH (261 aa).

Phosphate is bound by residues R87 and 125–127 (GTR).

It belongs to the RNase PH family. In terms of assembly, homohexameric ring arranged as a trimer of dimers.

It carries out the reaction tRNA(n+1) + phosphate = tRNA(n) + a ribonucleoside 5'-diphosphate. Functionally, phosphorolytic 3'-5' exoribonuclease that plays an important role in tRNA 3'-end maturation. Removes nucleotide residues following the 3'-CCA terminus of tRNAs; can also add nucleotides to the ends of RNA molecules by using nucleoside diphosphates as substrates, but this may not be physiologically important. Probably plays a role in initiation of 16S rRNA degradation (leading to ribosome degradation) during starvation. In Caldanaerobacter subterraneus subsp. tengcongensis (strain DSM 15242 / JCM 11007 / NBRC 100824 / MB4) (Thermoanaerobacter tengcongensis), this protein is Ribonuclease PH.